A 395-amino-acid chain; its full sequence is S-adenosylmethionine synthase (395 aa).

An ATP-binding site is contributed by histidine 18. Aspartate 20 contributes to the Mg(2+) binding site. Residue glutamate 46 coordinates K(+). Residues glutamate 59 and glutamine 103 each coordinate L-methionine. A flexible loop region spans residues 103–113 (QSVDIAVGVDA). ATP is bound by residues 170 to 172 (DAK), 235 to 236 (KF), aspartate 244, 250 to 251 (RK), alanine 267, and lysine 271. An L-methionine-binding site is contributed by aspartate 244. Lysine 275 provides a ligand contact to L-methionine.

This sequence belongs to the AdoMet synthase family. In terms of assembly, homotetramer; dimer of dimers. Mg(2+) is required as a cofactor. The cofactor is K(+).

Its subcellular location is the cytoplasm. The enzyme catalyses L-methionine + ATP + H2O = S-adenosyl-L-methionine + phosphate + diphosphate. It functions in the pathway amino-acid biosynthesis; S-adenosyl-L-methionine biosynthesis; S-adenosyl-L-methionine from L-methionine: step 1/1. Its function is as follows. Catalyzes the formation of S-adenosylmethionine (AdoMet) from methionine and ATP. The overall synthetic reaction is composed of two sequential steps, AdoMet formation and the subsequent tripolyphosphate hydrolysis which occurs prior to release of AdoMet from the enzyme. The sequence is that of S-adenosylmethionine synthase from Acidiphilium cryptum (strain JF-5).